A 236-amino-acid polypeptide reads, in one-letter code: Auxin-responsive protein IAA16 (236 aa).

An EAR-like (transcriptional repression) motif is present at residues 9 to 13; it reads LRLGL. A disordered region spans residues 82 to 110; that stretch reads KNVMSGQKPTTGDATEGNDKTSGSSGATS. Residues 85-94 are compositionally biased toward polar residues; that stretch reads MSGQKPTTGD. The PB1 domain maps to 118 to 218; the sequence is VAYVKVSMDG…SCKRIRIMKG (101 aa).

Belongs to the Aux/IAA family. In terms of assembly, homodimers and heterodimers.

The protein localises to the nucleus. In terms of biological role, aux/IAA proteins are short-lived transcriptional factors that function as repressors of early auxin response genes at low auxin concentrations. Repression is thought to result from the interaction with auxin response factors (ARFs), proteins that bind to the auxin-responsive promoter element (AuxRE). Formation of heterodimers with ARF proteins may alter their ability to modulate early auxin response genes expression. The chain is Auxin-responsive protein IAA16 (IAA16) from Arabidopsis thaliana (Mouse-ear cress).